We begin with the raw amino-acid sequence, 183 residues long: NADH-quinone oxidoreductase subunit I (183 aa).

4Fe-4S ferredoxin-type domains lie at 71-100 and 117-146; these read KRDE…MKAA and EIYE…LTTS. Residues Cys-80, Cys-83, Cys-86, Cys-90, Cys-126, Cys-129, Cys-132, and Cys-136 each coordinate [4Fe-4S] cluster.

It belongs to the complex I 23 kDa subunit family. NDH-1 is composed of 14 different subunits. Subunits NuoA, H, J, K, L, M, N constitute the membrane sector of the complex. [4Fe-4S] cluster serves as cofactor.

Its subcellular location is the cell inner membrane. The catalysed reaction is a quinone + NADH + 5 H(+)(in) = a quinol + NAD(+) + 4 H(+)(out). In terms of biological role, NDH-1 shuttles electrons from NADH, via FMN and iron-sulfur (Fe-S) centers, to quinones in the respiratory chain. The immediate electron acceptor for the enzyme in this species is believed to be ubiquinone. Couples the redox reaction to proton translocation (for every two electrons transferred, four hydrogen ions are translocated across the cytoplasmic membrane), and thus conserves the redox energy in a proton gradient. In Flavobacterium psychrophilum (strain ATCC 49511 / DSM 21280 / CIP 103535 / JIP02/86), this protein is NADH-quinone oxidoreductase subunit I.